We begin with the raw amino-acid sequence, 207 residues long: Outer-membrane lipoprotein carrier protein (207 aa).

Positions 1 to 21 are cleaved as a signal peptide; the sequence is MRAIRMLLVSALALGTVTAYA.

This sequence belongs to the LolA family. In terms of assembly, monomer.

The protein resides in the periplasm. Participates in the translocation of lipoproteins from the inner membrane to the outer membrane. Only forms a complex with a lipoprotein if the residue after the N-terminal Cys is not an aspartate (The Asp acts as a targeting signal to indicate that the lipoprotein should stay in the inner membrane). This is Outer-membrane lipoprotein carrier protein from Pseudomonas putida (strain GB-1).